Consider the following 156-residue polypeptide: Type II secretion system core protein G (156 aa).

Residues 1–22 (MQQSQRGCGQNSYGQSGYRQRG) constitute a propeptide, leader sequence. F23 carries the N-methylphenylalanine modification. Residues 23–43 (FTLLEIMVVIVILGVLASLVV) traverse the membrane as a helical segment.

Belongs to the GSP G family. As to quaternary structure, type II secretion system is composed of four main components: the outer membrane complex, the inner membrane complex, the cytoplasmic secretion ATPase and the periplasm-spanning pseudopilus. Forms homomultimers. Cleaved by the prepilin peptidase. In terms of processing, methylated by prepilin peptidase at the amino group of the N-terminal phenylalanine once the leader sequence is cleaved.

It is found in the cell inner membrane. In terms of biological role, core component of the type II secretion system required for the energy-dependent secretion of extracellular factors such as proteases and toxins from the periplasm. Pseudopilin (pilin-like) protein that polymerizes to form the pseudopilus. Further polymerization triggers pseudopilus growth. The chain is Type II secretion system core protein G (outG) from Pectobacterium carotovorum subsp. carotovorum (Erwinia carotovora subsp. carotovora).